A 122-amino-acid chain; its full sequence is MLNTMLGNYFPILLFILVGLAIGVLSMLAGWLLAPNKPDAEKLSPYECGFGAFEDARMKFDVRYYLIAILFILFDLEIAFLFPWAVVLKEIGWFGFVAMLVFLGLLVVGFIYEWVKGALEWD.

Helical transmembrane passes span Ile12–Leu32, Ile67–Val87, and Ile91–Ile111.

This sequence belongs to the complex I subunit 3 family. NDH-1 is composed of 14 different subunits. Subunits NuoA, H, J, K, L, M, N constitute the membrane sector of the complex.

It localises to the cell inner membrane. It catalyses the reaction a quinone + NADH + 5 H(+)(in) = a quinol + NAD(+) + 4 H(+)(out). Its function is as follows. NDH-1 shuttles electrons from NADH, via FMN and iron-sulfur (Fe-S) centers, to quinones in the respiratory chain. The immediate electron acceptor for the enzyme in this species is believed to be ubiquinone. Couples the redox reaction to proton translocation (for every two electrons transferred, four hydrogen ions are translocated across the cytoplasmic membrane), and thus conserves the redox energy in a proton gradient. The polypeptide is NADH-quinone oxidoreductase subunit A (Nitrosomonas europaea (strain ATCC 19718 / CIP 103999 / KCTC 2705 / NBRC 14298)).